A 314-amino-acid polypeptide reads, in one-letter code: Acetaldehyde dehydrogenase 1/2 (314 aa).

S12–I15 lines the NAD(+) pocket. Residue C130 is the Acyl-thioester intermediate of the active site. Residues S161–N169 and N288 each bind NAD(+).

The protein belongs to the acetaldehyde dehydrogenase family.

The enzyme catalyses acetaldehyde + NAD(+) + CoA = acetyl-CoA + NADH + H(+). The polypeptide is Acetaldehyde dehydrogenase 1/2 (Rhizorhabdus wittichii (strain DSM 6014 / CCUG 31198 / JCM 15750 / NBRC 105917 / EY 4224 / RW1) (Sphingomonas wittichii)).